The sequence spans 316 residues: Lipoyl synthase (316 aa).

[4Fe-4S] cluster-binding residues include Cys61, Cys66, Cys72, Cys87, Cys91, Cys94, and Ser301. Residues 73-290 (FGKGTATFMI…ERAAIEMGFS (218 aa)) enclose the Radical SAM core domain.

This sequence belongs to the radical SAM superfamily. Lipoyl synthase family. Requires [4Fe-4S] cluster as cofactor.

The protein localises to the cytoplasm. It carries out the reaction [[Fe-S] cluster scaffold protein carrying a second [4Fe-4S](2+) cluster] + N(6)-octanoyl-L-lysyl-[protein] + 2 oxidized [2Fe-2S]-[ferredoxin] + 2 S-adenosyl-L-methionine + 4 H(+) = [[Fe-S] cluster scaffold protein] + N(6)-[(R)-dihydrolipoyl]-L-lysyl-[protein] + 4 Fe(3+) + 2 hydrogen sulfide + 2 5'-deoxyadenosine + 2 L-methionine + 2 reduced [2Fe-2S]-[ferredoxin]. The protein operates within protein modification; protein lipoylation via endogenous pathway; protein N(6)-(lipoyl)lysine from octanoyl-[acyl-carrier-protein]: step 2/2. In terms of biological role, catalyzes the radical-mediated insertion of two sulfur atoms into the C-6 and C-8 positions of the octanoyl moiety bound to the lipoyl domains of lipoate-dependent enzymes, thereby converting the octanoylated domains into lipoylated derivatives. In Nitrosospira multiformis (strain ATCC 25196 / NCIMB 11849 / C 71), this protein is Lipoyl synthase.